The following is a 213-amino-acid chain: ATP synthase peripheral stalk subunit OSCP, mitochondrial (213 aa).

The N-terminal 23 residues, Met1–Pro23, are a transit peptide targeting the mitochondrion. Residues Ala5–Pro23 carry the SIFI-degron motif. 4 positions are modified to N6-acetyllysine: Lys54, Lys60, Lys70, and Lys73. Lys90 carries the N6-succinyllysine modification. 2 positions are modified to N6-acetyllysine; alternate: Lys158 and Lys162. An N6-succinyllysine; alternate mark is found at Lys158 and Lys162. 3 positions are modified to N6-acetyllysine: Lys172, Lys176, and Lys192. Lys199 bears the N6-succinyllysine mark.

This sequence belongs to the ATPase delta chain family. As to quaternary structure, component of the ATP synthase complex composed at least of ATP5F1A/subunit alpha, ATP5F1B/subunit beta, ATP5MC1/subunit c (homooctomer), MT-ATP6/subunit a, MT-ATP8/subunit 8, ATP5ME/subunit e, ATP5MF/subunit f, ATP5MG/subunit g, ATP5MK/subunit k, ATP5MJ/subunit j, ATP5F1C/subunit gamma, ATP5F1D/subunit delta, ATP5F1E/subunit epsilon, ATP5PF/subunit F6, ATP5PB/subunit b, ATP5PD/subunit d, ATP5PO/subunit OSCP. ATP synthase complex consists of a soluble F(1) head domain (subunits alpha(3) and beta(3)) - the catalytic core - and a membrane F(0) domain - the membrane proton channel (subunits c, a, 8, e, f, g, k and j). These two domains are linked by a central stalk (subunits gamma, delta, and epsilon) rotating inside the F1 region and a stationary peripheral stalk (subunits F6, b, d, and OSCP). In terms of processing, acetylation at Lys-162 decreases ATP production. Deacetylated by SIRT3. Post-translationally, in response to mitochondrial stress, the precursor protein is ubiquitinated by the SIFI complex in the cytoplasm before mitochondrial import, leading to its degradation. Within the SIFI complex, UBR4 initiates ubiquitin chain that are further elongated or branched by KCMF1.

Its subcellular location is the mitochondrion. The protein resides in the mitochondrion inner membrane. Its function is as follows. Subunit OSCP, of the mitochondrial membrane ATP synthase complex (F(1)F(0) ATP synthase or Complex V) that produces ATP from ADP in the presence of a proton gradient across the membrane which is generated by electron transport complexes of the respiratory chain. ATP synthase complex consist of a soluble F(1) head domain - the catalytic core - and a membrane F(1) domain - the membrane proton channel. These two domains are linked by a central stalk rotating inside the F(1) region and a stationary peripheral stalk. During catalysis, ATP synthesis in the catalytic domain of F(1) is coupled via a rotary mechanism of the central stalk subunits to proton translocation. In vivo, can only synthesize ATP although its ATP hydrolase activity can be activated artificially in vitro. Part of the complex F(0) domain. Part of the complex F(0) domain and the peripheric stalk, which acts as a stator to hold the catalytic alpha(3)beta(3) subcomplex and subunit a/ATP6 static relative to the rotary elements. The polypeptide is ATP synthase peripheral stalk subunit OSCP, mitochondrial (Plecturocebus moloch (Dusky titi monkey)).